The primary structure comprises 431 residues: Serine/threonine-protein kinase SSN3 (431 aa).

The 329-residue stretch at 27-355 (YQIIGYIAAG…ADNALVHPYF (329 aa)) folds into the Protein kinase domain. Residues 33–41 (IAAGTYGKV) and lysine 59 each bind ATP. The Proton acceptor role is filled by aspartate 174. The tract at residues 397 to 431 (RHGGAYDDQHNNSNNNTNNSLNANNANNVPRKRAR) is disordered. Residues 407–424 (NNSNNNTNNSLNANNANN) are compositionally biased toward low complexity.

This sequence belongs to the protein kinase superfamily. CMGC Ser/Thr protein kinase family. CDC2/CDKX subfamily. Component of the srb8-11 complex, a regulatory module of the Mediator complex. Mg(2+) is required as a cofactor.

The protein resides in the nucleus. The catalysed reaction is L-seryl-[protein] + ATP = O-phospho-L-seryl-[protein] + ADP + H(+). It catalyses the reaction L-threonyl-[protein] + ATP = O-phospho-L-threonyl-[protein] + ADP + H(+). The enzyme catalyses [DNA-directed RNA polymerase] + ATP = phospho-[DNA-directed RNA polymerase] + ADP + H(+). Its function is as follows. Component of the srb8-11 complex. The srb8-11 complex is a regulatory module of the Mediator complex which is itself dependent transcription. The srb8-11 complex may be involved in the transcriptional repression of a subset of genes regulated by Mediator. It may inhibit the association of the Mediator complex with RNA polymerase II to form the holoenzyme complex. The srb8-11 complex phosphorylates the C-terminal domain (CTD) of the largest subunit of RNA polymerase II. In Scheffersomyces stipitis (strain ATCC 58785 / CBS 6054 / NBRC 10063 / NRRL Y-11545) (Yeast), this protein is Serine/threonine-protein kinase SSN3 (SSN3).